We begin with the raw amino-acid sequence, 1038 residues long: E3 ubiquitin-protein ligase Topors (1038 aa).

The tract at residues 53-96 (ESGSESGDNEAEEPVSAGPDNANAIGEPGTSASAAEENGTVERN) is disordered. The RING-type zinc finger occupies 102 to 141 (CAICLSRCRRKCFTDSCMHQFCFKCLCEWSKIKPECPLCK). The interval 495–682 (AAANAEVAAI…SSDSSTTNSE (188 aa)) is interaction with hairy/hry. 2 disordered regions span residues 627 to 858 (DQLR…SSTA) and 972 to 1038 (GESE…LLPY). Positions 633–642 (RSIRSKKSRR) are enriched in basic residues. Low complexity predominate over residues 643-668 (SSMPARSDSGSSPSSCSSSSFHFSSS). Positions 686-699 (KKSRKRVANNKRSK) are enriched in basic residues. The segment covering 723 to 744 (QQQISQKKPQRQPESSSDSPSS) has biased composition (low complexity). Residues 792-801 (ATLEDRKPVK) are compositionally biased toward basic and acidic residues. Residue Thr820 is modified to Phosphothreonine. Position 822 is a phosphoserine (Ser822). Residues 841 to 858 (SHSNQSSQSASLASSSTA) show a composition bias toward low complexity. Residues 987 to 1031 (EEQDEEDEEDEDQEEDDQEEEKAAEEEEEEEEDDDDSDNHDENDE) show a composition bias toward acidic residues.

Interacts with hairy/hry, p53 and Top1. Interacts with the gypsy chromatin insulator complex, composed of Cp190, mod(mdg4) and su(Hw); interacts directly with mod(mdg4) and su(Hw). Interacts with Lam/lamin.

Its subcellular location is the nucleus. The protein localises to the chromosome. It catalyses the reaction S-ubiquitinyl-[E2 ubiquitin-conjugating enzyme]-L-cysteine + [acceptor protein]-L-lysine = [E2 ubiquitin-conjugating enzyme]-L-cysteine + N(6)-ubiquitinyl-[acceptor protein]-L-lysine.. Functionally, functions as a ubiquitin-protein E3 ligase. Negatively regulates the transcriptional repressor hairy/hry by promoting its ubiquitination and subsequent degradation. Also directs the nuclear organization of the gypsy chromatin insulator. Chromatin insulators are regulatory elements which establish independent domains of transcriptional activity within eukaryotic genomes. Insulators have two defining properties; they can block the communication between an enhancer and a promoter when placed between them, and can also buffer transgenes from position effect variegation (PEV). Insulators are proposed to structure the chromatin fiber into independent domains of differing transcriptional potential by promoting the formation of distinct chromatin loops. This chromatin looping may require the formation of insulator bodies, where homotypic interactions between individual subunits of the insulator complex could promote the clustering of widely spaced insulators at the nuclear periphery. Within the gypsy insulator complex, this protein may promote formation of nuclear insulator bodies by recruiting individual insulator complexes to the nuclear lamina. This is E3 ubiquitin-protein ligase Topors (Topors) from Drosophila melanogaster (Fruit fly).